The primary structure comprises 252 residues: C-type lectin domain family 2 member D3 (252 aa).

A disordered region spans residues Met-1–Arg-58. The Cytoplasmic segment spans residues Met-1–Tyr-78. A compositionally biased stretch (polar residues) spans Gly-16–Gln-29. The span at Ser-30 to Ser-43 shows a compositional bias: low complexity. Residues Gly-79 to Val-99 traverse the membrane as a helical; Signal-anchor for type II membrane protein segment. The Extracellular segment spans residues Lys-100–Gln-252. Residues Tyr-137 to Ser-242 enclose the C-type lectin domain. N-linked (GlcNAc...) asparagine glycosylation is present at Asn-150. A disulfide bond links Cys-158 and Cys-241.

The protein localises to the cell membrane. Its function is as follows. Lectin-type cell surface receptor. In Rattus norvegicus (Rat), this protein is C-type lectin domain family 2 member D3 (Clec2d3).